Here is a 297-residue protein sequence, read N- to C-terminus: uncharacterized protein (297 aa).

Helical transmembrane passes span 3-23 (DYIY…LYML), 38-58 (VIHI…MPAL), 103-123 (IEGI…TALL), and 128-148 (YVFL…LLAM).

It localises to the cell membrane. This is an uncharacterized protein from Bacillus subtilis (strain 168).